Consider the following 948-residue polypeptide: Coatomer subunit beta-2 (948 aa).

6 HEAT repeats span residues 49 to 87, 92 to 126, 127 to 164, 274 to 311, 312 to 349, and 391 to 428; these read ETIP…TDSK, PEMI…MKET, EIVE…LPHG, TAIR…TLHR, DIMV…HHNI, and EVAS…TNPK.

As to quaternary structure, oligomeric complex that consists of at least the alpha, beta, beta', gamma, delta, epsilon and zeta subunits.

The protein localises to the cytoplasm. It is found in the golgi apparatus membrane. It localises to the cytoplasmic vesicle. Its subcellular location is the COPI-coated vesicle membrane. Functionally, the coatomer is a cytosolic protein complex that binds to dilysine motifs and reversibly associates with Golgi non-clathrin-coated vesicles, which further mediate biosynthetic protein transport from the ER, via the Golgi up to the trans Golgi network. Coatomer complex is required for budding from Golgi membranes, and is essential for the retrograde Golgi-to-ER transport of dilysine-tagged proteins. This is Coatomer subunit beta-2 from Arabidopsis thaliana (Mouse-ear cress).